Consider the following 412-residue polypeptide: MGLKHLIEKLEPHFTHGGKLEKYYPLYEAAATIFYTPGQVTRGAAHVRDAIDLKRMMILVWFAVFPAMFWGMYNVGLQTIPALHKLYGAEQLQQAIANNWHYSVAQWLGVSFSADAGWLSMMTLGAVFFLPIYITVFIVGGFWEVLFAIVRKHEINEGFFVTSILFALIVPPTLPLWQAALGISFGVVIAKEIFGGTGRNFLNPALAGRAFLFFAYPAQISGDLVWTAADGFSGATPLSQWASGGGEALVNVATGVPVSWMDAFLGNIPGSIGEVSTLMIFIGGAIILFGRVASWRIVAGVMIGMIATATLFNVIGSDTNPMFAMPWYWHLVLGGFAFGMMFMATDPVSASFTDKGKWSYGVLIGVMCVLIRVVNPAYPEGMMLAILFANLFAPLFDYLVVQANIKRRKSRG.

3 helical membrane passes run 57-77 (MILVWFAVFPAMFWGMYNVGL), 127-147 (VFFLPIYITVFIVGGFWEVLF), and 163-183 (SILFALIVPPTLPLWQAALGI). At threonine 236 the chain carries FMN phosphoryl threonine. Helical transmembrane passes span 270–290 (GSIGEVSTLMIFIGGAIILFG), 297–317 (IVAGVMIGMIATATLFNVIGS), 322–342 (MFAMPWYWHLVLGGFAFGMMF), 358–378 (WSYGVLIGVMCVLIRVVNPAY), and 381–401 (GMMLAILFANLFAPLFDYLVV).

Belongs to the NqrB/RnfD family. Composed of six subunits; NqrA, NqrB, NqrC, NqrD, NqrE and NqrF. Requires FMN as cofactor.

Its subcellular location is the cell inner membrane. It catalyses the reaction a ubiquinone + n Na(+)(in) + NADH + H(+) = a ubiquinol + n Na(+)(out) + NAD(+). Its function is as follows. NQR complex catalyzes the reduction of ubiquinone-1 to ubiquinol by two successive reactions, coupled with the transport of Na(+) ions from the cytoplasm to the periplasm. NqrA to NqrE are probably involved in the second step, the conversion of ubisemiquinone to ubiquinol. In Klebsiella pneumoniae subsp. pneumoniae (strain ATCC 700721 / MGH 78578), this protein is Na(+)-translocating NADH-quinone reductase subunit B.